Reading from the N-terminus, the 183-residue chain is Nucleosome assembly protein 1-like 5 (183 aa).

The tract at residues 1–71 (MADSENQGPA…APKPKNDFIE (71 aa)) is disordered. 2 stretches are compositionally biased toward low complexity: residues 7 to 21 (QGPA…AAEA) and 28 to 49 (AEGG…SAAG). Residues 81–107 (VLALKKLQKRCDKIEAKFDKEFQALEK) are a coiled coil. The span at 135–161 (EGEEEEEEEYEDDEEEGEEEEEEEEAA) shows a compositional bias: acidic residues. Residues 135-183 (EGEEEEEEEYEDDEEEGEEEEEEEEAAAEAAAGAKHDDAHAEMPDDAKK) are disordered. The span at 168-183 (AKHDDAHAEMPDDAKK) shows a compositional bias: basic and acidic residues.

This sequence belongs to the nucleosome assembly protein (NAP) family.

The protein resides in the nucleus. The protein is Nucleosome assembly protein 1-like 5 (NAP1L5) of Pongo abelii (Sumatran orangutan).